The primary structure comprises 267 residues: Putative transcription factor Ovo-like 1 (267 aa).

4 C2H2-type zinc fingers span residues Phe118–His140, His146–His168, Tyr174–His197, and Tyr213–His235.

It localises to the nucleus. Functionally, putative transcription factor. Involved in hair formation and spermatogenesis. May function in the differentiation and/or maintenance of the urogenital system. The polypeptide is Putative transcription factor Ovo-like 1 (OVOL1) (Bos taurus (Bovine)).